Consider the following 66-residue polypeptide: Large ribosomal subunit protein bL35 (66 aa).

2 stretches are compositionally biased toward basic residues: residues 1–16 and 23–45; these read MPKFKTHRASAKRFKK and KRGHAYTSHRFHGKTKKQRRQLR. The disordered stretch occupies residues 1-66; that stretch reads MPKFKTHRAS…RIRQMLSQMK (66 aa).

This sequence belongs to the bacterial ribosomal protein bL35 family.

This is Large ribosomal subunit protein bL35 from Lacticaseibacillus casei (strain BL23) (Lactobacillus casei).